The following is a 275-amino-acid chain: Small ribosomal subunit protein uS3 (275 aa).

Positions 38-106 constitute a KH type-2 domain; the sequence is IRRMMTSGME…QVQLNILEVK (69 aa). Positions 216–228 are enriched in low complexity; sequence NAAARAGNRPARG. Positions 216 to 275 are disordered; the sequence is NAAARAGNRPARGGADRPARGGRGGERGGRGRKPQQAPAAEAPKAEAPAAAPAESTGTEA. The segment covering 229–244 has biased composition (basic and acidic residues); the sequence is GADRPARGGRGGERGG. The segment covering 249 to 268 has biased composition (low complexity); the sequence is PQQAPAAEAPKAEAPAAAPA.

It belongs to the universal ribosomal protein uS3 family. Part of the 30S ribosomal subunit. Forms a tight complex with proteins S10 and S14.

Binds the lower part of the 30S subunit head. Binds mRNA in the 70S ribosome, positioning it for translation. The polypeptide is Small ribosomal subunit protein uS3 (Streptomyces avermitilis (strain ATCC 31267 / DSM 46492 / JCM 5070 / NBRC 14893 / NCIMB 12804 / NRRL 8165 / MA-4680)).